Reading from the N-terminus, the 483-residue chain is Rhamnulokinase (483 aa).

ATP is bound at residue 11–15; that stretch reads ASSGR. Substrate is bound by residues glycine 79 and 234–236; that span reads HDT. Aspartate 235 functions as the Proton acceptor in the catalytic mechanism. Residue threonine 257 participates in ATP binding. Asparagine 294 is a substrate binding site. Glutamine 302 serves as a coordination point for ATP. A disulfide bridge links cysteine 352 with cysteine 369. Glycine 401 is an ATP binding site.

It belongs to the rhamnulokinase family. The cofactor is Mg(2+).

It catalyses the reaction L-rhamnulose + ATP = L-rhamnulose 1-phosphate + ADP + H(+). The protein operates within carbohydrate degradation; L-rhamnose degradation; glycerone phosphate from L-rhamnose: step 2/3. In terms of biological role, involved in the catabolism of L-rhamnose (6-deoxy-L-mannose). Catalyzes the transfer of the gamma-phosphate group from ATP to the 1-hydroxyl group of L-rhamnulose to yield L-rhamnulose 1-phosphate. The sequence is that of Rhamnulokinase from Listeria monocytogenes serovar 1/2a (strain ATCC BAA-679 / EGD-e).